The primary structure comprises 681 residues: Pumilio domain-containing protein C6G9.14 (681 aa).

2 disordered regions span residues 180–210 (RPGL…PGLI) and 273–322 (ASTA…NVPS). 2 stretches are compositionally biased toward low complexity: residues 187–210 (TPGP…PGLI) and 273–286 (ASTA…SSGS). The PUM-HD domain occupies 319-659 (NVPSLISDDP…RILSKLERRH (341 aa)). Pumilio repeat units follow at residues 342-378 (SLQN…AVFA), 379-414 (ETHP…TFIQ), 415-451 (IIAP…CIVN), 452-487 (ALRP…FIFD), 488-523 (AICE…QLVE), 524-559 (HIVP…AIIS), 560-595 (YFLY…KLIS), and 596-633 (ELMD…ELVE). Positions 656-666 (ERRHPSSKEKP) are enriched in basic and acidic residues. The segment at 656-681 (ERRHPSSKEKPIVYSNSERVNTSSSA) is disordered. The segment covering 669-681 (YSNSERVNTSSSA) has biased composition (polar residues).

This Schizosaccharomyces pombe (strain 972 / ATCC 24843) (Fission yeast) protein is Pumilio domain-containing protein C6G9.14.